The chain runs to 264 residues: Small ribosomal subunit protein eS1 (264 aa).

N6-acetyllysine; alternate is present on Lys-34. Lys-34 participates in a covalent cross-link: Glycyl lysine isopeptide (Lys-Gly) (interchain with G-Cter in SUMO2); alternate. The residue at position 56 (Lys-56) is an N6-acetyllysine. Tyr-155 is modified (ADP-ribosyltyrosine). Residues 232 to 264 (HGEGSSSGKATGDETGAKVERADGYEPPVQESV) form a disordered region. Ser-236 and Ser-237 each carry phosphoserine. The segment covering 242-255 (TGDETGAKVERADG) has biased composition (basic and acidic residues). The residue at position 249 (Lys-249) is an N6-acetyllysine; alternate. Residue Lys-249 forms a Glycyl lysine isopeptide (Lys-Gly) (interchain with G-Cter in SUMO2); alternate linkage. Tyr-256 is subject to Phosphotyrosine. A Phosphoserine modification is found at Ser-263.

Belongs to the eukaryotic ribosomal protein eS1 family. As to quaternary structure, component of the small ribosomal subunit. Mature ribosomes consist of a small (40S) and a large (60S) subunit. The 40S subunit contains about 33 different proteins and 1 molecule of RNA (18S). The 60S subunit contains about 49 different proteins and 3 molecules of RNA (28S, 5.8S and 5S). Identified in a IGF2BP1-dependent mRNP granule complex containing untranslated mRNAs. Binds with high affinity to IPO4. Interacts with DDIT3. Part of the small subunit (SSU) processome, composed of more than 70 proteins and the RNA chaperone small nucleolar RNA (snoRNA) U3. In terms of processing, ADP-ribosylated at Tyr-155 by PARP1 in presence of HPF1.

It localises to the cytoplasm. It is found in the nucleus. Its subcellular location is the nucleolus. Its function is as follows. Component of the small ribosomal subunit. The ribosome is a large ribonucleoprotein complex responsible for the synthesis of proteins in the cell. Part of the small subunit (SSU) processome, first precursor of the small eukaryotic ribosomal subunit. During the assembly of the SSU processome in the nucleolus, many ribosome biogenesis factors, an RNA chaperone and ribosomal proteins associate with the nascent pre-rRNA and work in concert to generate RNA folding, modifications, rearrangements and cleavage as well as targeted degradation of pre-ribosomal RNA by the RNA exosome. May play a role during erythropoiesis through regulation of transcription factor DDIT3. This chain is Small ribosomal subunit protein eS1, found in Macaca fascicularis (Crab-eating macaque).